Consider the following 208-residue polypeptide: ATP-dependent Clp protease proteolytic subunit (208 aa).

Residue Ser-105 is the Nucleophile of the active site. Residue His-130 is part of the active site.

It belongs to the peptidase S14 family. Fourteen ClpP subunits assemble into 2 heptameric rings which stack back to back to give a disk-like structure with a central cavity, resembling the structure of eukaryotic proteasomes.

It localises to the cytoplasm. The enzyme catalyses Hydrolysis of proteins to small peptides in the presence of ATP and magnesium. alpha-casein is the usual test substrate. In the absence of ATP, only oligopeptides shorter than five residues are hydrolyzed (such as succinyl-Leu-Tyr-|-NHMec, and Leu-Tyr-Leu-|-Tyr-Trp, in which cleavage of the -Tyr-|-Leu- and -Tyr-|-Trp bonds also occurs).. Functionally, cleaves peptides in various proteins in a process that requires ATP hydrolysis. Has a chymotrypsin-like activity. Plays a major role in the degradation of misfolded proteins. This Xylella fastidiosa (strain M12) protein is ATP-dependent Clp protease proteolytic subunit.